The sequence spans 282 residues: Probable aquaporin PIP2-6 (282 aa).

2 helical membrane passes run 39–59 (ALIAEFIATLLFLYITVATVI) and 76–96 (LGIAWAFGGMIFILVYCTAGI). The short motif at 102–104 (NPA) is the NPA 1 element. 3 helical membrane-spanning segments follow: residues 121 to 141 (VMYIVAQCLGGIVGVGIVKGI), 163 to 183 (GTALGAEIIGTFVLVYTVFSA), and 197 to 217 (VLAPLPIGFAVFMVHLATIPI). Positions 223–225 (NPA) match the NPA 2 motif. The chain crosses the membrane as a helical span at residues 245–265 (IFWAGPFIGALAAAAYHQYIL).

This sequence belongs to the MIP/aquaporin (TC 1.A.8) family. PIP (TC 1.A.8.11) subfamily. As to expression, expressed in roots and leaves.

It localises to the cell membrane. Aquaporins facilitate the transport of water and small neutral solutes across cell membranes. In Oryza sativa subsp. japonica (Rice), this protein is Probable aquaporin PIP2-6 (PIP2-6).